Consider the following 434-residue polypeptide: Monodehydroascorbate reductase 1, peroxisomal (434 aa).

FAD contacts are provided by residues 13-16 (GGVS), E40, R47, K52, I95, and 146-147 (RE). Residues 171–177 (GGYIGLE), E195, R201, and G260 contribute to the NAD(+) site. 173–177 (YIGLE) serves as a coordination point for NADP(+). NADP(+) contacts are provided by R201 and G260. D297 contacts FAD. 313–314 (EH) lines the NAD(+) pocket. 313-314 (EH) serves as a coordination point for NADP(+). V315 lines the FAD pocket. R319 provides a ligand contact to L-ascorbate. Y348 contributes to the FAD binding site. Y348 contacts NAD(+). Position 348 (Y348) interacts with NADP(+). Position 350 (R350) interacts with L-ascorbate. The residue at position 416 (S416) is a Phosphoserine.

It belongs to the FAD-dependent oxidoreductase family. It depends on FAD as a cofactor.

It localises to the peroxisome matrix. The catalysed reaction is 2 monodehydro-L-ascorbate radical + NADH + H(+) = 2 L-ascorbate + NAD(+). In terms of biological role, catalyzes the conversion of monodehydroascorbate to ascorbate, oxidizing NADH in the process. This chain is Monodehydroascorbate reductase 1, peroxisomal, found in Arabidopsis thaliana (Mouse-ear cress).